The sequence spans 278 residues: Ribosomal RNA small subunit methyltransferase A (278 aa).

S-adenosyl-L-methionine is bound by residues Asn-18, Leu-20, Gly-45, Glu-66, Asp-89, and Asn-110.

This sequence belongs to the class I-like SAM-binding methyltransferase superfamily. rRNA adenine N(6)-methyltransferase family. RsmA subfamily.

It is found in the cytoplasm. The catalysed reaction is adenosine(1518)/adenosine(1519) in 16S rRNA + 4 S-adenosyl-L-methionine = N(6)-dimethyladenosine(1518)/N(6)-dimethyladenosine(1519) in 16S rRNA + 4 S-adenosyl-L-homocysteine + 4 H(+). Its function is as follows. Specifically dimethylates two adjacent adenosines (A1518 and A1519) in the loop of a conserved hairpin near the 3'-end of 16S rRNA in the 30S particle. May play a critical role in biogenesis of 30S subunits. In Cupriavidus metallidurans (strain ATCC 43123 / DSM 2839 / NBRC 102507 / CH34) (Ralstonia metallidurans), this protein is Ribosomal RNA small subunit methyltransferase A.